A 302-amino-acid polypeptide reads, in one-letter code: Tetrahydromethanopterin S-methyltransferase subunit E (302 aa).

The next 6 helical transmembrane spans lie at 3–23 (PLISMGVLALIGVAATIAGAS), 86–106 (PLFALVFGSLIAACVHATFAV), 132–152 (ITPIMGYAFITTFCILVVSYL), 155–175 (VVLGHPFPLTMLAFIWGITIG), 233–253 (PVTGLAFGMTVFLGSWITTIF), and 259–279 (LGWLSVIAGIVIVFILIIWNW).

The protein belongs to the MtrE family. The complex is composed of 8 subunits; MtrA, MtrB, MtrC, MtrD, MtrE, MtrF, MtrG and MtrH.

It localises to the cell membrane. It carries out the reaction 5-methyl-5,6,7,8-tetrahydromethanopterin + coenzyme M + 2 Na(+)(in) = 5,6,7,8-tetrahydromethanopterin + methyl-coenzyme M + 2 Na(+)(out). The protein operates within one-carbon metabolism; methanogenesis from CO(2); methyl-coenzyme M from 5,10-methylene-5,6,7,8-tetrahydromethanopterin: step 2/2. Its function is as follows. Part of a complex that catalyzes the formation of methyl-coenzyme M and tetrahydromethanopterin from coenzyme M and methyl-tetrahydromethanopterin. This is an energy-conserving, sodium-ion translocating step. In Methanosarcina barkeri (strain Fusaro / DSM 804), this protein is Tetrahydromethanopterin S-methyltransferase subunit E.